The sequence spans 114 residues: UPF0342 protein PEPE_0673 (114 aa).

It belongs to the UPF0342 family.

The sequence is that of UPF0342 protein PEPE_0673 from Pediococcus pentosaceus (strain ATCC 25745 / CCUG 21536 / LMG 10740 / 183-1w).